The primary structure comprises 127 residues: DNA-directed RNA polymerase subunit omega (127 aa).

This sequence belongs to the RNA polymerase subunit omega family. As to quaternary structure, the RNAP catalytic core consists of 2 alpha, 1 beta, 1 beta' and 1 omega subunit. When a sigma factor is associated with the core the holoenzyme is formed, which can initiate transcription.

The catalysed reaction is RNA(n) + a ribonucleoside 5'-triphosphate = RNA(n+1) + diphosphate. Functionally, promotes RNA polymerase assembly. Latches the N- and C-terminal regions of the beta' subunit thereby facilitating its interaction with the beta and alpha subunits. This chain is DNA-directed RNA polymerase subunit omega, found in Rickettsia canadensis (strain McKiel).